The following is a 338-amino-acid chain: Trace amine-associated receptor 9 (338 aa).

Over 1 to 23 (MELCYENVNGSCIKSSYSPWPRA) the chain is Extracellular. Asparagine 9 is a glycosylation site (N-linked (GlcNAc...) asparagine). 2 disulfides stabilise this stretch: cysteine 12–cysteine 176 and cysteine 95–cysteine 180. Residues 24-48 (ILYAVLGLGALLAVFGNLLVITAIL) form a helical membrane-spanning segment. Over 49 to 58 (HFKQLHTPTN) the chain is Cytoplasmic. A helical membrane pass occupies residues 59 to 80 (FLVASLACADFLVGVTVMPFST). Residues 81 to 95 (VRSVEGCWYFGDTYC) lie on the Extracellular side of the membrane. Residues 96–118 (KFHTCFDTSFCFASLFHLCCISI) traverse the membrane as a helical segment. Spermidine is bound by residues aspartate 102 and threonine 103. Residues 119 to 138 (DRYVAVTDPLTYPTKFTISV) lie on the Cytoplasmic side of the membrane. The helical transmembrane segment at 139–160 (SGVCIALSWFFSVTYSFSIFYT) threads the bilayer. Over 161–186 (GANEEGIEELVVALTCVGGCQAPLNQ) the chain is Extracellular. The extracellular Loop 2 (ECL2) stretch occupies residues 164-177 (EEGIEELVVALTCV). The chain crosses the membrane as a helical span at residues 187-208 (NWVLLCFLLFFLPTVVMVFLYG). Topologically, residues 209–246 (RIFLVAKQQARKIEGSANQPQASSESYKERVARRERKA) are cytoplasmic. The helical transmembrane segment at 247–270 (AKTLGIAMAAFLVSWLPYIIDAVI) threads the bilayer. The Extracellular segment spans residues 271–283 (DAYMNFITPAYVY). Residues 284–304 (EILVWCVYYNSAMNPLIYAFF) traverse the membrane as a helical segment. Residues 305-338 (YPWFRKAIKLIVSGKVFRADSSRTNLFSEEAGAG) lie on the Cytoplasmic side of the membrane.

This sequence belongs to the G-protein coupled receptor 1 family. Mainly expressed in neurons of the olfactory epithelium. Also expressed in the intestine.

Its subcellular location is the cell membrane. In terms of biological role, olfactory receptor specific for trace amines, such as triethylamine, N-methylpiperidine, N,N-dimethylcyclohexylamine (DMCHA), beta-phenylethylamine (beta-PEA), cadaverine (CAD) and polyamines such as spermidine. Trace amine compounds are enriched in animal body fluids and act on trace amine-associated receptors (TAARs) to elicit both intraspecific and interspecific innate behaviors. Trace amine-binding causes a conformation change that triggers signaling via G(s)-class of G alpha proteins (GNAL or GNAS). In mature olfactory sensory neurons, Taar9 is coupled with GNAL/G(olf)G alpha protein and mediates activation of adenylate cyclase activity to activate cAMP signaling and eventually transmit odorant signals to achieve membrane depolarization. In immature olfactory sensory neurons, Taar9 is coupled with GNAS/G(s) G alpha proteins. This is Trace amine-associated receptor 9 from Rattus norvegicus (Rat).